The chain runs to 2186 residues: Non-reducing polyketide synthase men2 (2186 aa).

The region spanning 16-255 is the Starter acyltransferase (SAT) domain; it reads FFGDQTVDAL…MQLPLGTPAH (240 aa). The region spanning 382 to 815 is the Ketosynthase family 3 (KS3) domain; sequence SNLIAVVGQS…GGNNCVLLEE (434 aa). Active-site for beta-ketoacyl synthase activity residues include Cys-554, His-690, and His-729. The region spanning 914–1204 is the Malonyl-CoA:ACP transacylase (MAT) domain; that stretch reads VFAFTGQGAQ…SSLVKSTLSA (291 aa). The product template (PT) domain stretch occupies residues 1299 to 1623; sequence TASLQQVRSE…TRRVLATVLG (325 aa). The interval 1303 to 1434 is N-terminal hotdog fold; that stretch reads QQVRSEQING…CKLHFDKRGS (132 aa). The PKS/mFAS DH domain occupies 1303–1619; that stretch reads QQVRSEQING…FQRLTRRVLA (317 aa). His-1335 functions as the Proton acceptor; for dehydratase activity in the catalytic mechanism. Residues 1463 to 1619 form a C-terminal hotdog fold region; the sequence is TGHRLPKSVV…FQRLTRRVLA (157 aa). Residue Asp-1523 is the Proton donor; for dehydratase activity of the active site. Positions 1666-1742 constitute a Carrier 1 domain; it reads VGDEKADAAI…GLRRAISELS (77 aa). Ser-1702 carries the O-(pantetheine 4'-phosphoryl)serine modification. Positions 1747–1785 are disordered; it reads GPASGSVSVSSSATTTHGMTTPSSTSSAQSSQSSQTPDG. Over residues 1749–1783 the composition is skewed to low complexity; that stretch reads ASGSVSVSSSATTTHGMTTPSSTSSAQSSQSSQTP. Residues 1784 to 1861 enclose the Carrier 2 domain; sequence DGPGIYANAV…HVRRALGSDS (78 aa). Position 1821 is an O-(pantetheine 4'-phosphoryl)serine (Ser-1821). The interval 1857 to 1878 is disordered; sequence LGSDSDGDSKPKSAPAPPAPEP. A thioesterase (TE) domain region spans residues 1921–2163; that stretch reads LFFLPDGTGY…TMPCDHLSLL (243 aa).

Pantetheine 4'-phosphate is required as a cofactor.

It participates in secondary metabolite biosynthesis. In terms of biological role, non-reducing polyketide synthase; part of the gene cluster that mediates the biosynthesis of menisporopsin A, a bioactive macrocyclic polylactone. The biosynthesis of menisporopsin A is performed by a reducing (man1) and a non-reducing (men2) polyketide synthase that catalyze the formation of each menisporopsin A subunits, while the esterification and cyclolactonization activities are probably peformed by the unusual thioesterase domain of men2. First, a reduced diketide intermediate, 3-hydroxybutyryl-S-ACP is produced by men1 and transferred to men2; this is followed by a second reduced diketide which is further elongated using 3 units of malonyl-coA to form a reduced pentaketide. The cyclization of this intermediate by the PT domain forms the second subunit, 2,4-dihydroxy-6-(2-hydroxy-n-propyl)benzoyl-S-ACP. The TE domain of men2 then esterifies the secondary hydroxyl group on the side chain of the second subunit with the acyl-TE of the first subunit to form the first ester intermediate. This process occurs iteratively to form a linear tetraester intermediate. The final subunit is formed by a similar process, except that an extra malonyl-CoA is required in an additional elongation step to form a reduced hexaketide intermediate, and the carbonyl group next to the secondary hydroxyl group is reduced by a trans-acting ketoreductase. Again, the PT domain catalyzes cyclization to form the largest subunit, 2,4-dihydroxy-6-(2,4-dihydroxy-n-pentyl) benzoyl-S-ACP. Then the linear pentaester intermediate is formed. In this step, if the intermediate transfer rate is slow, intra- molecular cyclization involving the secondary hydroxyl group of the pentaester intermediate may occur to form menisporopsin B. Alternatively, transfer of the pentaester intermediate to the TE domain would allow cyclolactonization to be catalyzed by the TE to form menisporopsin A. This is Non-reducing polyketide synthase men2 from Menisporopsis theobromae.